A 160-amino-acid chain; its full sequence is Sperm acrosome-associated protein 5 (160 aa).

Positions 1–21 are cleaved as a signal peptide; it reads MKVCSIVVVILAVLLIAKLDA. Residues 22-150 enclose the C-type lysozyme domain; it reads KIYERCELAK…SEWLKGCSVR (129 aa). 4 disulfides stabilise this stretch: cysteine 27/cysteine 147, cysteine 51/cysteine 135, cysteine 85/cysteine 100, and cysteine 96/cysteine 114. The active site involves glutamate 56.

It belongs to the glycosyl hydrolase 22 family.

The protein localises to the secreted. It carries out the reaction Hydrolysis of (1-&gt;4)-beta-linkages between N-acetylmuramic acid and N-acetyl-D-glucosamine residues in a peptidoglycan and between N-acetyl-D-glucosamine residues in chitodextrins.. This is Sperm acrosome-associated protein 5 (Spaca5) from Mus musculus (Mouse).